Consider the following 1892-residue polypeptide: Sodium channel protein type 4 subunit alpha A (1892 aa).

At 1 to 125 the chain is on the cytoplasmic side; it reads MATILPPPGT…RGAIKILIHS (125 aa). Residues 34–54 form a disordered region; the sequence is APKAGAHEEEEPPTPNPDLEA. An I repeat occupies 107-433; it reads ILSPFSLVRR…VVAMAYDEQN (327 aa). A helical transmembrane segment spans residues 126 to 144; that stretch reads LFSTLIMITILSNCVFMTM. Topologically, residues 145–151 are extracellular; it reads SNPPAWS. Residues 152-172 traverse the membrane as a helical segment; it reads KTVEYVFTGIYTFEATVKVLS. At 173-186 the chain is on the cytoplasmic side; the sequence is RGFCVGPFTFLRDP. Residues 187–204 traverse the membrane as a helical segment; it reads WNWLDFMVISMAYITEFV. Topologically, residues 205-210 are extracellular; it reads DLGNVS. N208 is a glycosylation site (N-linked (GlcNAc...) asparagine). The helical transmembrane segment at 211-227 threads the bilayer; sequence ALRTFRVLRALKTITVI. Over 228–246 the chain is Cytoplasmic; it reads PGLKTIVAALIQSVKKMVD. The helical transmembrane segment at 247–266 threads the bilayer; sequence VMILTVFALAVFALVGLQLF. Over 267-370 the chain is Extracellular; it reads MGNLRHKCIR…PNYGYTSFDS (104 aa). C274 and C339 are oxidised to a cystine. N-linked (GlcNAc...) asparagine glycosylation is found at N281, N294, and N341. An intrachain disulfide couples C348 to C354. The pore-forming intramembrane region spans 371–395; the sequence is FGWAFLALFRLMTQDNWESLFQLTL. The Extracellular segment spans residues 396-402; sequence RAAGQTY. A helical transmembrane segment spans residues 403 to 423; that stretch reads MLFFVVVIFLGSFYLINLILA. Residues 424-612 lie on the Cytoplasmic side of the membrane; it reads VVAMAYDEQN…KWVHFVVMDP (189 aa). An II repeat occupies 594-866; it reads CCEKWVVFKK…QIAIGRITRG (273 aa). The chain crosses the membrane as a helical span at residues 613–631; that stretch reads FVDLAITICIVLNTLFMAM. At 632 to 642 the chain is on the extracellular side; that stretch reads EHYPMTEEFDY. The chain crosses the membrane as a helical span at residues 643 to 662; sequence MLSVGNLVFTGIFAAEMFFK. Over 663–676 the chain is Cytoplasmic; that stretch reads LIAMDPYYYFQVGW. Residues 677–696 traverse the membrane as a helical segment; it reads NIFDSIIVTLSLVELGLANV. Residues 697 to 698 lie on the Extracellular side of the membrane; that stretch reads QG. Residues 699–716 form a helical membrane-spanning segment; the sequence is LSVLRSFRLLRVFKLAKS. Topologically, residues 717–732 are cytoplasmic; the sequence is WPTLNMLIKIIGNSVG. A helical transmembrane segment spans residues 733–751; the sequence is ALGNLTLVLAIIVFIFAVV. At 752 to 780 the chain is on the extracellular side; sequence GMQLFGKSYKDCVCKISSDCELPRWHMND. C765 and C771 are disulfide-bonded. An intramembrane region (pore-forming) is located at residues 781 to 801; the sequence is FFHSFLIVFRILCGEWIETMW. Over 802 to 812 the chain is Extracellular; sequence DCMEVAGAGMC. C803 and C812 form a disulfide bridge. Residues 813–831 form a helical membrane-spanning segment; it reads LVVFMMVMVIGNLVVLNLF. The Cytoplasmic portion of the chain corresponds to 832–1071; it reads LALLLSSFSG…TCFTIVEHDW (240 aa). 2 disordered regions span residues 884-905 and 945-982; these read REPQ…TEGM and LGES…GVED. Positions 948 to 971 are enriched in acidic residues; the sequence is SDSENPSEDDDDQEDDVDSEVTCE. An III repeat occupies 1052-1366; the sequence is KGKKWWNLRK…KKYYEAMKKL (315 aa). The helical transmembrane segment at 1072–1089 threads the bilayer; it reads FETFIIFMILLSSGALAF. At 1090-1102 the chain is on the extracellular side; that stretch reads EDIYIERRRTVKI. A helical transmembrane segment spans residues 1103–1121; it reads VLEFADKVFTFIFVIEMLL. At 1122–1135 the chain is on the cytoplasmic side; that stretch reads KWVAYGFKTYFTNA. A helical transmembrane segment spans residues 1136-1154; the sequence is WCWLDFFIVDISLISLSAN. The Extracellular segment spans residues 1155 to 1162; that stretch reads LMGFSDLG. The helical transmembrane segment at 1163 to 1181 threads the bilayer; the sequence is PIKSLRTLRALRPLRALSR. The Cytoplasmic segment spans residues 1182–1198; the sequence is FEGMRVVVNALIGAIPS. A helical membrane pass occupies residues 1199-1218; it reads IFNVLLVCLIFWLIFSIMGV. Residues 1219–1270 lie on the Extracellular side of the membrane; it reads NLFAGKFYRCINTTTAELFPISVVNNKSDCVALQEATQEARWVNVKVNYDNV. A disulfide bridge links C1228 with C1248. N-linked (GlcNAc...) asparagine glycosylation is found at N1230 and N1244. The segment at residues 1271–1292 is an intramembrane region (pore-forming); the sequence is AKGYLSLLQIATFKGWMDIMYP. Topologically, residues 1293–1309 are extracellular; it reads AVDSREVEEQPSYEINL. A helical transmembrane segment spans residues 1310–1331; that stretch reads YMYIYFVIFIIFGSFFTLNLFI. Residues 1332-1394 are Cytoplasmic-facing; the sequence is GVIIDNFNQQ…LVFDFISQQF (63 aa). The interval 1350-1352 is important for rapid channel inactivation; the sequence is IFM. An IV repeat occupies 1375 to 1673; the sequence is IPRPANLIQG…WEKFDTGGTQ (299 aa). The helical transmembrane segment at 1395–1412 threads the bilayer; it reads FDIFIMVLICLNMVTMMV. At 1413–1423 the chain is on the extracellular side; sequence ETDDQSPAKED. Residues 1424-1442 traverse the membrane as a helical segment; sequence FLFKVNVAFIVVFTGECTL. Over 1443–1454 the chain is Cytoplasmic; sequence KLFALRHYFFTN. A helical transmembrane segment spans residues 1455 to 1472; it reads GWNIFDFIVVILSIAGTM. Over 1473 to 1485 the chain is Extracellular; it reads LSDIIEKYFVSPT. A helical transmembrane segment spans residues 1486–1502; the sequence is LFRVIRLARIGRILRLI. The Cytoplasmic portion of the chain corresponds to 1503–1521; that stretch reads KGARGIRTLLFALMMSLPA. Residues 1522-1539 traverse the membrane as a helical segment; sequence LFNIGLLLFLIMFIFSIF. Topologically, residues 1540–1561 are extracellular; it reads GMSNFAYVKKEAGINDMFNFET. An intramembrane region (pore-forming) is located at residues 1562-1584; that stretch reads FGSSIICLFQITTSAGWDTLLLP. Topologically, residues 1585-1614 are extracellular; sequence MLNKEPPDCDPAFENPGTDVKGNCGNPMMG. A disulfide bridge links C1593 with C1608. The chain crosses the membrane as a helical span at residues 1615-1637; sequence MVFFCSYIIISFLVVVNMYIAII. Residues 1638 to 1892 lie on the Cytoplasmic side of the membrane; sequence LENFNVAQEE…TQTILRETNV (255 aa). An IQ domain is found at 1767–1796; it reads EDMAAVVIQRAYRNHLHKRGIHHAAYIQRS. The tract at residues 1836-1856 is disordered; the sequence is RRRPDPQTRCSGARCSPEPPE.

It belongs to the sodium channel (TC 1.A.1.10) family. Nav1.4/SCN4A subfamily. In terms of assembly, voltage-gated sodium (Nav) channels consist of an ion-conducting alpha subunit which is functional on its own associated with regulatory beta subunits.

The protein localises to the cell membrane. It carries out the reaction Na(+)(in) = Na(+)(out). Pore-forming subunit of a voltage-gated sodium (Nav) channel that directly mediates the depolarizing phase of action potentials in excitable membranes. Navs, also called VGSCs (voltage-gated sodium channels) or VDSCs (voltage-dependent sodium channels), operate by switching between closed and open conformations depending on the voltage difference across the membrane. In the open conformation they allow Na(+) ions to selectively pass through the pore, along their electrochemical gradient. The influx of Na+ ions provokes membrane depolarization, initiating the propagation of electrical signals throughout cells and tissues. This is Sodium channel protein type 4 subunit alpha A (scn4aa) from Takifugu rubripes (Japanese pufferfish).